A 617-amino-acid chain; its full sequence is UvrABC system protein C (617 aa).

The region spanning 22 to 100 (NLPGVYRFFN…IKALSPKYNI (79 aa)) is the GIY-YIG domain. In terms of domain architecture, UVR spans 209-244 (DELTRTLQHKMQTAAANLQFEEAARYRDQIQALGIM).

This sequence belongs to the UvrC family. Interacts with UvrB in an incision complex.

Its subcellular location is the cytoplasm. Its function is as follows. The UvrABC repair system catalyzes the recognition and processing of DNA lesions. UvrC both incises the 5' and 3' sides of the lesion. The N-terminal half is responsible for the 3' incision and the C-terminal half is responsible for the 5' incision. This Neisseria meningitidis serogroup B (strain ATCC BAA-335 / MC58) protein is UvrABC system protein C.